Consider the following 485-residue polypeptide: Arginine biosynthesis bifunctional protein ArgJ, mitochondrial (485 aa).

Substrate-binding residues include Thr185, Lys214, Thr225, and Glu315. Thr225 (nucleophile) is an active-site residue.

This sequence belongs to the ArgJ family. As to quaternary structure, heterodimer of an alpha and a beta chain. The alpha and beta chains are autoproteolytically processed from a single precursor protein within the mitochondrion.

It localises to the mitochondrion matrix. It carries out the reaction N(2)-acetyl-L-ornithine + L-glutamate = N-acetyl-L-glutamate + L-ornithine. It catalyses the reaction L-glutamate + acetyl-CoA = N-acetyl-L-glutamate + CoA + H(+). It participates in amino-acid biosynthesis; L-arginine biosynthesis; L-ornithine and N-acetyl-L-glutamate from L-glutamate and N(2)-acetyl-L-ornithine (cyclic): step 1/1. Its pathway is amino-acid biosynthesis; L-arginine biosynthesis; N(2)-acetyl-L-ornithine from L-glutamate: step 1/4. Catalyzes two activities which are involved in the cyclic version of arginine biosynthesis: the synthesis of acetylglutamate from glutamate and acetyl-CoA, and of ornithine by transacetylation between acetylornithine and glutamate. This is Arginine biosynthesis bifunctional protein ArgJ, mitochondrial from Penicillium rubens (strain ATCC 28089 / DSM 1075 / NRRL 1951 / Wisconsin 54-1255) (Penicillium chrysogenum).